A 341-amino-acid chain; its full sequence is Methionine import ATP-binding protein MetN (341 aa).

In terms of domain architecture, ABC transporter spans 9–247; it reads ISVEQLNKEI…PQSAITEELF (239 aa). Residue 41–48 participates in ATP binding; the sequence is GHSGSGKS.

The protein belongs to the ABC transporter superfamily. Methionine importer (TC 3.A.1.24) family. The complex is composed of two ATP-binding proteins (MetN), two transmembrane proteins (MetI) and a solute-binding protein (MetQ).

It localises to the cell inner membrane. The catalysed reaction is L-methionine(out) + ATP + H2O = L-methionine(in) + ADP + phosphate + H(+). It catalyses the reaction D-methionine(out) + ATP + H2O = D-methionine(in) + ADP + phosphate + H(+). Part of the ABC transporter complex MetNIQ involved in methionine import. Responsible for energy coupling to the transport system. The protein is Methionine import ATP-binding protein MetN of Chlamydia abortus (strain DSM 27085 / S26/3) (Chlamydophila abortus).